The primary structure comprises 293 residues: 4-diphosphocytidyl-2-C-methyl-D-erythritol kinase (293 aa).

Lysine 10 is an active-site residue. 94-104 (PVSAGLAGGSS) is a binding site for ATP. Aspartate 136 is an active-site residue.

Belongs to the GHMP kinase family. IspE subfamily.

It carries out the reaction 4-CDP-2-C-methyl-D-erythritol + ATP = 4-CDP-2-C-methyl-D-erythritol 2-phosphate + ADP + H(+). It participates in isoprenoid biosynthesis; isopentenyl diphosphate biosynthesis via DXP pathway; isopentenyl diphosphate from 1-deoxy-D-xylulose 5-phosphate: step 3/6. Functionally, catalyzes the phosphorylation of the position 2 hydroxy group of 4-diphosphocytidyl-2C-methyl-D-erythritol. The protein is 4-diphosphocytidyl-2-C-methyl-D-erythritol kinase of Listeria monocytogenes serotype 4b (strain CLIP80459).